Consider the following 160-residue polypeptide: Cytosolic iron-sulfur assembly component 2A (160 aa).

Residues His89, His123, Glu150, and Glu153 each contribute to the Zn(2+) site.

The protein belongs to the MIP18 family. As to quaternary structure, monomer and homodimer. Component of the CIA complex. Interacts with CIAO1. Interacts with IREB2. Interacts with APAF1.

The protein resides in the cytoplasm. Functionally, component of the cytosolic iron-sulfur protein assembly (CIA) complex, a multiprotein complex that mediates the incorporation of iron-sulfur cluster into extramitochondrial Fe/S proteins. As a CIA complex component and in collaboration with CIAO1 specifically matures ACO1 and stabilizes IREB2, connecting cytosolic iron-sulfur protein maturation with cellular iron regulation. May play a role in chromosome segregation through establishment of sister chromatid cohesion. May induce apoptosis in collaboration with APAF1. The protein is Cytosolic iron-sulfur assembly component 2A of Bos taurus (Bovine).